The primary structure comprises 211 residues: Phosphatidylglycerophosphatase C (211 aa).

Over 1–33 (MATHERRVVFFDLDGTLHQQDMFGSFLRYLLRR) the chain is Cytoplasmic. Residues 34–54 (QPLNALLVLPLLPIIAIALLI) traverse the membrane as a helical segment. Over 55–211 (KGRAARWPMS…TPRGELQQLE (157 aa)) the chain is Periplasmic.

Requires Mg(2+) as cofactor.

The protein localises to the cell inner membrane. It carries out the reaction a 1,2-diacyl-sn-glycero-3-phospho-(1'-sn-glycero-3'-phosphate) + H2O = a 1,2-diacyl-sn-glycero-3-phospho-(1'-sn-glycerol) + phosphate. It participates in phospholipid metabolism; phosphatidylglycerol biosynthesis; phosphatidylglycerol from CDP-diacylglycerol: step 2/2. Its function is as follows. Lipid phosphatase which dephosphorylates phosphatidylglycerophosphate (PGP) to phosphatidylglycerol (PG). This is Phosphatidylglycerophosphatase C (pgpC) from Escherichia coli (strain K12).